The sequence spans 354 residues: N-acetyl-gamma-glutamyl-phosphate reductase (354 aa).

C156 is an active-site residue.

This sequence belongs to the NAGSA dehydrogenase family. Type 1 subfamily.

It is found in the cytoplasm. It catalyses the reaction N-acetyl-L-glutamate 5-semialdehyde + phosphate + NADP(+) = N-acetyl-L-glutamyl 5-phosphate + NADPH + H(+). It functions in the pathway amino-acid biosynthesis; L-arginine biosynthesis; N(2)-acetyl-L-ornithine from L-glutamate: step 3/4. Its function is as follows. Catalyzes the NADPH-dependent reduction of N-acetyl-5-glutamyl phosphate to yield N-acetyl-L-glutamate 5-semialdehyde. The sequence is that of N-acetyl-gamma-glutamyl-phosphate reductase from Bordetella pertussis (strain Tohama I / ATCC BAA-589 / NCTC 13251).